The chain runs to 1557 residues: ABC transporter atnG (1557 aa).

A run of 5 helical transmembrane segments spans residues 27–47 (FTLY…LILA), 70–90 (LKLL…AFWM), 99–119 (LTIA…YLIH), 131–151 (IISI…RTIW), and 159–179 (VSAI…LETW). Residues N202 and N249 are each glycosylated (N-linked (GlcNAc...) asparagine). The next 6 helical transmembrane spans lie at 256–276 (AGAM…AGVF), 311–331 (ATLL…ATAT), 385–405 (YIHD…LLYN), 412–432 (IAPI…AMMA), 490–510 (LLIA…IVSF), and 531–551 (LTSL…VESI). Residues 279–556 (LCQSGFIISQ…LVESISETAM (278 aa)) enclose the ABC transmembrane type-1 1 domain. Residues 593 to 829 (AFEVDVGWKN…LDYIQGFAIA (237 aa)) form the ABC transporter 1 domain. 625–632 (GAVGCGKT) is a binding site for ATP. N667 carries an N-linked (GlcNAc...) asparagine glycan. The helical transmembrane segment at 882–902 (LVYFGLMAIFVFLQAFPTVWV) threads the bilayer. The region spanning 882 to 1162 (LVYFGLMAIF…LITDWTVLET (281 aa)) is the ABC transmembrane type-1 2 domain. An N-linked (GlcNAc...) asparagine glycan is attached at N916. A run of 4 helical transmembrane segments spans residues 921–941 (IGVY…TACF), 996–1016 (AVLQ…IIAV), 1020–1040 (YITA…TFYM), and 1105–1125 (LSLV…GIAV). N-linked (GlcNAc...) asparagine glycosylation occurs at N1132. A helical transmembrane segment spans residues 1135–1155 (SLGLALVNVVSLSASVKALIT). The ABC transporter 2 domain occupies 1199–1431 (VEYKNVSAFY…PSVFRELYKS (233 aa)). N1203 and N1218 each carry an N-linked (GlcNAc...) asparagine glycan. 1233 to 1240 (GRSGSGKS) is a binding site for ATP. 2 disordered regions span residues 1439–1464 (ERQE…EELR) and 1503–1557 (RTRS…RGLH). The span at 1507–1522 (RSRDHSAERRESKRYS) shows a compositional bias: basic and acidic residues.

The protein belongs to the ABC transporter superfamily. ABCC family. Conjugate transporter (TC 3.A.1.208) subfamily.

It localises to the cell membrane. In terms of biological role, ABC transporter; part of the gene cluster that mediates the biosynthesis of aspercryptins, linear lipopeptides built from six amino acids including 2 highly unusual and nonproteogenic amino acids, 2-amino-octanoic acid (2aoa) and 2-amino-dodecanol (2adol). In Emericella nidulans (strain FGSC A4 / ATCC 38163 / CBS 112.46 / NRRL 194 / M139) (Aspergillus nidulans), this protein is ABC transporter atnG.